Consider the following 486-residue polypeptide: Cephamycin export protein CmcT (486 aa).

14 helical membrane-spanning segments follow: residues 24-44 (VLAC…TVAL), 56-76 (ASLQ…LLFG), 88-108 (VFLG…LATS), 121-141 (AGAA…FAEG), 153-173 (AVAL…TEFL), 178-198 (VLLV…RVLA), 210-230 (LDLP…LGVS), 241-261 (AVAV…VVEA), 284-304 (LAML…TLSM), 317-337 (LGFV…VPWL), 345-365 (VLIA…SLLT), 369-389 (AYLG…GLVG), 418-438 (FGGA…TSGS), and 450-470 (FVGI…LPAL).

Belongs to the major facilitator superfamily.

It localises to the cell membrane. Involved in cephamycin export. The sequence is that of Cephamycin export protein CmcT (cmcT) from Amycolatopsis lactamdurans (Nocardia lactamdurans).